We begin with the raw amino-acid sequence, 418 residues long: Acetylornithine aminotransferase (418 aa).

Residues 116–117 and Phe-149 contribute to the pyridoxal 5'-phosphate site; that span reads GA. Position 152 (Arg-152) interacts with N(2)-acetyl-L-ornithine. 240 to 243 serves as a coordination point for pyridoxal 5'-phosphate; the sequence is DEVQ. Lys-269 is modified (N6-(pyridoxal phosphate)lysine). Ser-296 lines the N(2)-acetyl-L-ornithine pocket. Thr-297 contributes to the pyridoxal 5'-phosphate binding site.

This sequence belongs to the class-III pyridoxal-phosphate-dependent aminotransferase family. ArgD subfamily. As to quaternary structure, homodimer. The cofactor is pyridoxal 5'-phosphate.

It localises to the cytoplasm. The catalysed reaction is N(2)-acetyl-L-ornithine + 2-oxoglutarate = N-acetyl-L-glutamate 5-semialdehyde + L-glutamate. The protein operates within amino-acid biosynthesis; L-arginine biosynthesis; N(2)-acetyl-L-ornithine from L-glutamate: step 4/4. This is Acetylornithine aminotransferase from Prochlorococcus marinus (strain MIT 9313).